We begin with the raw amino-acid sequence, 679 residues long: Glycine--tRNA ligase beta subunit (679 aa).

It belongs to the class-II aminoacyl-tRNA synthetase family. As to quaternary structure, tetramer of two alpha and two beta subunits.

The protein localises to the cytoplasm. It catalyses the reaction tRNA(Gly) + glycine + ATP = glycyl-tRNA(Gly) + AMP + diphosphate. This is Glycine--tRNA ligase beta subunit from Streptococcus pyogenes serotype M1.